A 1106-amino-acid polypeptide reads, in one-letter code: GYF domain-containing protein gyf-1 (1106 aa).

The segment covering 1–17 (MSSVSSAEPTAQQNFNP) has biased composition (polar residues). Disordered stretches follow at residues 1–50 (MSSV…GGFD), 160–370 (GALQ…DSTV), and 383–434 (KAST…SAWS). The segment covering 30–42 (RGGSISSGNNRSS) has biased composition (low complexity). A compositionally biased stretch (polar residues) spans 162-180 (LQNGQSPTSRWAPKSSWNK). Gly residues predominate over residues 207–224 (GRGGGRIGGENGFGGATN). Polar residues predominate over residues 229-243 (AAQNEDSPGTYQSKF). Residues 248-261 (RGGGAGSVGRGGST) show a composition bias toward gly residues. A compositionally biased stretch (polar residues) spans 306 to 322 (VGSTSRTSTNAAPQSSE). 2 stretches are compositionally biased toward low complexity: residues 334-353 (QRTQQQQQQQQQQSTQQQAQ) and 390-410 (PPQQQQQQQQRSSAPVSAPSR). The GYF domain occupies 459–508 (PVQFYYMDPTETRRGPFPKDQMNVWFKAGYFTDESLRVQRGENGEYKTIG). Residues 584–746 (LDDHNRRLAE…ERKRAAERER (163 aa)) are a coiled coil. Disordered stretches follow at residues 778–811 (AFTGAPKQVSPSGSEESDEWISTSKEVKHTKTAP), 909–928 (KNSQPKIAVPAKSAPTSAKV), 1026–1076 (AGGR…DGNI), and 1087–1106 (RLNKGEIDAVPSAPVNPSRR). The segment covering 786–801 (VSPSGSEESDEWISTS) has biased composition (polar residues). The segment covering 1046–1057 (SDSNSGSNSNSG) has biased composition (low complexity).

This Caenorhabditis elegans protein is GYF domain-containing protein gyf-1.